A 330-amino-acid chain; its full sequence is tRNA U34 carboxymethyltransferase (330 aa).

Residues lysine 91, tryptophan 105, lysine 110, glycine 130, 152-154 (DPS), 181-182 (IE), methionine 196, tyrosine 200, and arginine 315 each bind carboxy-S-adenosyl-L-methionine.

It belongs to the class I-like SAM-binding methyltransferase superfamily. CmoB family. As to quaternary structure, homotetramer.

It catalyses the reaction carboxy-S-adenosyl-L-methionine + 5-hydroxyuridine(34) in tRNA = 5-carboxymethoxyuridine(34) in tRNA + S-adenosyl-L-homocysteine + H(+). In terms of biological role, catalyzes carboxymethyl transfer from carboxy-S-adenosyl-L-methionine (Cx-SAM) to 5-hydroxyuridine (ho5U) to form 5-carboxymethoxyuridine (cmo5U) at position 34 in tRNAs. In Shewanella sediminis (strain HAW-EB3), this protein is tRNA U34 carboxymethyltransferase.